Reading from the N-terminus, the 354-residue chain is UDP-3-O-acylglucosamine N-acyltransferase (354 aa).

The active-site Proton acceptor is the H245.

Belongs to the transferase hexapeptide repeat family. LpxD subfamily. Homotrimer.

It catalyses the reaction a UDP-3-O-[(3R)-3-hydroxyacyl]-alpha-D-glucosamine + a (3R)-hydroxyacyl-[ACP] = a UDP-2-N,3-O-bis[(3R)-3-hydroxyacyl]-alpha-D-glucosamine + holo-[ACP] + H(+). Its pathway is bacterial outer membrane biogenesis; LPS lipid A biosynthesis. Catalyzes the N-acylation of UDP-3-O-acylglucosamine using 3-hydroxyacyl-ACP as the acyl donor. Is involved in the biosynthesis of lipid A, a phosphorylated glycolipid that anchors the lipopolysaccharide to the outer membrane of the cell. The chain is UDP-3-O-acylglucosamine N-acyltransferase from Anaeromyxobacter sp. (strain K).